Consider the following 618-residue polypeptide: Manganese lipoxygenase (618 aa).

The N-terminal stretch at 1-16 (MRSRILAIVFAARHVA) is a signal peptide. Positions 36–45 (SSTTVLPSPT) are enriched in low complexity. Residues 36-58 (SSTTVLPSPTQYTLPNNDPNQGA) form a disordered region. The span at 46-58 (QYTLPNNDPNQGA) shows a compositional bias: polar residues. A Lipoxygenase domain is found at 47-618 (YTLPNNDPNQ…PAVNPFFLSV (572 aa)). N-linked (GlcNAc...) asparagine glycans are attached at residues Asn-60, Asn-91, Asn-106, Asn-116, and Asn-157. The Mn(2+) site is built by His-290, His-294, His-478, and Asn-482. An N-linked (GlcNAc...) asparagine glycan is attached at Asn-513. Val-618 provides a ligand contact to Mn(2+).

This sequence belongs to the lipoxygenase family. Manganese lipoxygenase subfamily. Requires Mn(2+) as cofactor. N- and O-glycosylated.

It is found in the secreted. The catalysed reaction is (9Z,12Z)-octadecadienoate + O2 = (11S)-hydroperoxy-(9Z,12Z)-octadecadienoate. It catalyses the reaction (9Z,12Z)-octadecadienoate + O2 = (13R)-hydroperoxy-(9Z,11E)-octadecadienoate. It carries out the reaction (9Z,12Z,15Z)-octadecatrienoate + O2 = (11S)-hydroperoxy-(9Z,12Z,15Z)-octadecatrienoate. The enzyme catalyses (9Z,12Z,15Z)-octadecatrienoate + O2 = (13R)-hydroperoxy-(9Z,11E,15Z)-octadecatrienoate. Lipoxygenase that metabolizes linoleic and alpha-linolenic acids to 11S- and 13R-hydroperoxy fatty acids. At the end of lipoxygenation, the intermediate product 11S-HPODE from linoleic acid is then transformed into 13R-HPODE as the final product. It also acts on alpha-linolenic acid producing 11S-HPOTrE and 13R-HPOTrE with subsequent transformation of 11S-HPOTrE to 13R-HPOTrE as final product. This is Manganese lipoxygenase from Gaeumannomyces avenae (Oat take-all root rot fungus).